Here is a 152-residue protein sequence, read N- to C-terminus: 3-dehydroquinate dehydratase (152 aa).

Tyrosine 26 functions as the Proton acceptor in the catalytic mechanism. The substrate site is built by asparagine 78, histidine 84, and aspartate 91. The active-site Proton donor is histidine 104. Substrate contacts are provided by residues 105–106 (LS) and arginine 115.

The protein belongs to the type-II 3-dehydroquinase family. In terms of assembly, homododecamer.

The enzyme catalyses 3-dehydroquinate = 3-dehydroshikimate + H2O. Its pathway is metabolic intermediate biosynthesis; chorismate biosynthesis; chorismate from D-erythrose 4-phosphate and phosphoenolpyruvate: step 3/7. In terms of biological role, catalyzes a trans-dehydration via an enolate intermediate. This is 3-dehydroquinate dehydratase from Idiomarina loihiensis (strain ATCC BAA-735 / DSM 15497 / L2-TR).